The sequence spans 1110 residues: Sex-determining transformer protein 1 (1110 aa).

Disordered regions lie at residues 1–103 (MMAP…AQQS) and 170–202 (TING…DSDM). The segment covering 44–61 (GSEDKQPGGGDVKTENDP) has biased composition (basic and acidic residues). Over residues 65 to 90 (GLGSATSNFIQSSVPPSHQTLSNPLQ) the composition is skewed to polar residues. Residues 188-201 (NNAANSSNSGNDSD) are compositionally biased toward low complexity. Residues 208–233 (LTCRWKSCNSSFQTLKALVDHVQESH) form a C2H2-type 1; low DNA-binding affinity zinc finger. The C2H2-type 2; low DNA-binding affinity zinc finger occupies 244-270 (WRCEWEGCDRNETFKALYMLIVHVRRH). C2H2-type zinc fingers lie at residues 276–300 (NKCE…RRTH), 306–331 (YKCE…NRTH), and 337–362 (YSCQ…KAVH). Disordered stretches follow at residues 363–397 (GDDE…AMSH), 594–682 (EVEP…GSGE), 875–895 (RNVG…DQDR), and 1057–1110 (QEQP…RHQF). Positions 597–606 (PLQQQQQQEP) are enriched in low complexity. A compositionally biased stretch (gly residues) spans 641–652 (GNNGDGGFGGSG). Over residues 669 to 678 (PISQNGSRAS) the composition is skewed to polar residues. Positions 886 to 895 (RNNRGHDQDR) are enriched in basic and acidic residues. The span at 1057-1066 (QEQPTSSFSS) shows a compositional bias: polar residues. Over residues 1076–1086 (ALPPPPPPPAP) the composition is skewed to pro residues. A compositionally biased stretch (basic and acidic residues) spans 1092–1103 (SADNKDDSENIP).

The protein belongs to the GLI C2H2-type zinc-finger protein family. In terms of assembly, interacts with the MX regulatory domain of tra-2. As to expression, expressed in intestine and gonads (at protein level).

The protein resides in the cytoplasm. It localises to the nucleus. Plays a major role in controlling sexual phenotype. Terminal global regulator in a well-characterized cascade of sex-determining genes. Promotes female development. Interacts with tra-2 to promote spermatogenesis. Promotes spermatogenesis through the Tip60 HAT complex and by regulating the expression of genes, such as fog-3, required for male development. Association with chromatin and at the fog-3 promoter requires wdr-5.1, and may also require wdr-5.2. With trr-1, activates the fog-3 gene to determine sperm/oocyte cell fate. In hermaphrodites, binds to an intronic regulatory site in the ceh-30 gene, preventing ceh-30 transcription and thereby preventing survival of the CEM (cephalic male) sensory neurons. Represses the expression of the transcription factor dmd-3 in hermaphrodites to govern the timing and extent of male tail tip morphogenesis. Plays a role in controlling the sex-specific differentiation of PHC sensory neurons and represses the development of male-specific morphological features. This Caenorhabditis elegans protein is Sex-determining transformer protein 1.